The sequence spans 505 residues: GDP-Man:Man(3)GlcNAc(2)-PP-Dol alpha-1,2-mannosyltransferase (505 aa).

Topologically, residues 1-3 (MDE) are lumenal. A helical membrane pass occupies residues 4–24 (LIMMVFVLFTIVLLLTVSMTL). Residues 25–145 (AALISTIVVL…KWVEASTYPR (121 aa)) are Cytoplasmic-facing. The segment at residues 146–166 (FTLIGQSLGSMILGWEALTKF) is an intramembrane region (helical). Topologically, residues 167–402 (VPTIFLDSMG…VGIHTMYNEH (236 aa)) are cytoplasmic. The segment at residues 403 to 423 (FGIGVVELMAAGVIPVANNSA) is an intramembrane region (helical). Over 424 to 505 (GPKEDIVRHE…NNNSSSKKRN (82 aa)) the chain is Cytoplasmic.

Belongs to the glycosyltransferase group 1 family.

It is found in the endoplasmic reticulum membrane. It catalyses the reaction an alpha-D-Man-(1-&gt;3)-[alpha-D-Man-(1-&gt;6)]-beta-D-Man-(1-&gt;4)-beta-D-GlcNAc-(1-&gt;4)-alpha-D-GlcNAc-diphospho-di-trans,poly-cis-dolichol + 2 GDP-alpha-D-mannose = an alpha-D-Man-(1-&gt;2)-alpha-D-Man-(1-&gt;2)-alpha-D-Man-(1-&gt;3)-[alpha-D-Man-(1-&gt;6)]-beta-D-Man-(1-&gt;4)-beta-D-GlcNAc-(1-&gt;4)-alpha-D-GlcNAc-diphospho-di-trans,poly-cis-dolichol + 2 GDP + 2 H(+). It participates in protein modification; protein glycosylation. Functionally, GDP-Man:Man(3)GlcNAc(2)-PP-Dol alpha-1,2-mannosyltransferase that operates in the biosynthetic pathway of dolichol-linked oligosaccharides, the glycan precursors employed in protein asparagine (N)-glycosylation. The assembly of dolichol-linked oligosaccharides begins on the cytosolic side of the endoplasmic reticulum membrane and finishes in its lumen. The sequential addition of sugars to dolichol pyrophosphate produces dolichol-linked oligosaccharides containing fourteen sugars, including two GlcNAcs, nine mannoses and three glucoses. Once assembled, the oligosaccharide is transferred from the lipid to nascent proteins by oligosaccharyltransferases. Catalyzes, on the cytoplasmic face of the endoplasmic reticulum, the addition of the fourth and fifth mannose residues to the dolichol-linked oligosaccharide chain, to produce Man(5)GlcNAc(2)-PP-dolichol core oligosaccharide. This chain is GDP-Man:Man(3)GlcNAc(2)-PP-Dol alpha-1,2-mannosyltransferase (alg11), found in Dictyostelium discoideum (Social amoeba).